Reading from the N-terminus, the 389-residue chain is 26S proteasome regulatory subunit 6B homolog (389 aa).

175–182 (GPPGTGKT) contributes to the ATP binding site.

The protein belongs to the AAA ATPase family.

It is found in the cytoplasm. The protein localises to the nucleus. Functionally, the 26S proteasome is involved in the ATP-dependent degradation of ubiquitinated proteins. The regulatory (or ATPase) complex confers ATP dependency and substrate specificity to the 26S complex. This chain is 26S proteasome regulatory subunit 6B homolog (rpt3), found in Schizosaccharomyces pombe (strain 972 / ATCC 24843) (Fission yeast).